Here is a 239-residue protein sequence, read N- to C-terminus: Small ribosomal subunit protein uS2 (239 aa).

It belongs to the universal ribosomal protein uS2 family.

This is Small ribosomal subunit protein uS2 from Lysinibacillus sphaericus (strain C3-41).